A 395-amino-acid polypeptide reads, in one-letter code: RNA demethylase ALKBH5 (395 aa).

Disordered regions lie at residues 1-28 (MAAA…AGSR) and 47-83 (AAEP…EEEA). Ala2 is subject to N-acetylalanine. A Glycyl lysine isopeptide (Lys-Gly) (interchain with G-Cter in ubiquitin) cross-link involves residue Lys58. Basic and acidic residues predominate over residues 60-83 (KYQEDSDPERSDYEEHQLQKEEEA). Residues Ser65 and Ser70 each carry the phosphoserine modification. A coiled-coil region spans residues 68 to 117 (ERSDYEEHQLQKEEEARKVKSGIRQIRLFSQDECSKIEARIDEVVSRAEK). Position 72 is a phosphotyrosine (Tyr72). Residue Lys87 forms a Glycyl lysine isopeptide (Lys-Gly) (interchain with G-Cter in SUMO1) linkage. Phosphoserine is present on Ser88. Lys133 bears the N6-acetyllysine mark. The active site involves Tyr140. 3 residues coordinate 2-oxoglutarate: Asn194, Tyr196, and His205. Cysteines 231 and 268 form a disulfide. Lys236 bears the N6-acetyllysine mark. 2-oxoglutarate contacts are provided by His267 and Arg278. Positions 294–395 (ETKSLSSSTL…PTRKVKMRRH (102 aa)) are disordered. A compositionally biased stretch (low complexity) spans 296-306 (KSLSSSTLPPS). Lys322 is covalently cross-linked (Glycyl lysine isopeptide (Lys-Gly) (interchain with G-Cter in SUMO1)). Position 326 is a phosphoserine (Ser326). Residue Lys329 forms a Glycyl lysine isopeptide (Lys-Gly) (interchain with G-Cter in SUMO2) linkage. The segment covering 329 to 350 (KADPDAAHRPRILEMDKEENRR) has biased composition (basic and acidic residues). Arg360 bears the Omega-N-methylarginine mark. A phosphoserine mark is found at Ser362, Ser372, Ser375, and Ser385.

This sequence belongs to the alkB family. Monomer. Interacts with RBM33; promoting desumoylation by SENP1 and recruitment to N(6)-methyladenosine-containing mRNAs. Interacts (when acetylated by KAT8) with PSPC1; interaction facilitates recognition of N(6)-methyladenosine (m6A) mRNA. The cofactor is Fe(2+). Post-translationally, phosphorylated at Ser-88 and Ser-326 in response to reactive oxygen species (ROS), promoting sumoylation and inactivation. In terms of processing, acetylated by KAT8 at Lys-236, promoting interaction with PSPC1, thereby facilitating recognition of N(6)-methyladenosine (m6A) mRNA by ALKBH5. Deacetylated at Lys-236 by HDAC7. Sumoylated at Lys-87 and Lys-322 by PIAS4 following phosphorylation at Ser-88 and Ser-326 in response to reactive oxygen species (ROS), inhibiting the RNA demethylase activity. Desumoylated by SENP1; relieving RNA demethylase inhibition, leading to N(6)-methyladenosine-containing mRNAs demethylation. Post-translationally, ubiquitinated at Lys-58 via 'Lys-48'-linked polyubiquitin chain, leading to its degradation by the proteasome. Deubiquitinated at Lys-58 by USP9X, promoting its stabilizazion. Widely expressed, with highest expression in testis. In testis, present in almost all testicular cell types except elongating and elongated spermatids (at protein level). Among spermatogenic cells, present at high level in spermatocytes; medium levels in spermatogonia and lower levels in round spermatids (at protein level).

The protein resides in the nucleus speckle. It carries out the reaction an N(6)-methyladenosine in mRNA + 2-oxoglutarate + O2 = an adenosine in mRNA + formaldehyde + succinate + CO2. Its activity is regulated as follows. RNA demethylase activity is inhibited following sumoylation. Inhibition is relieved following desumoylation. Inhibited by histone demethylase inhibitor IOX1. Functionally, dioxygenase that specifically demethylates N(6)-methyladenosine (m6A) RNA, the most prevalent internal modification of messenger RNA (mRNA) in higher eukaryotes. Demethylates RNA by oxidative demethylation, which requires molecular oxygen, alpha-ketoglutarate and iron. Demethylation of m6A mRNA affects mRNA processing, translation and export. Can also demethylate N(6)-methyladenosine in single-stranded DNA (in vitro). Required for the late meiotic and haploid phases of spermatogenesis by mediating m6A demethylation in spermatocytes and round spermatids: m6A demethylation of target transcripts is required for correct splicing and the production of longer 3'-UTR mRNAs in male germ cells. Involved in paraspeckle assembly, a nuclear membraneless organelle, by undergoing liquid-liquid phase separation. Paraspeckle assembly is coupled with m6A demethylation of RNAs, such as NEAT1 non-coding RNA. Also acts as a negative regulator of T-cell development: inhibits gamma-delta T-cell proliferation via demethylation of JAG1 and NOTCH2 transcripts. Inhibits regulatory T-cell (Treg) recruitment by mediating demethylation and destabilization of CCL28 mRNAs. The polypeptide is RNA demethylase ALKBH5 (Mus musculus (Mouse)).